A 202-amino-acid polypeptide reads, in one-letter code: Holliday junction branch migration complex subunit RuvA (202 aa).

The interval 1-62 is domain I; it reads MIGYLRGRLH…EDAMELYGFT (62 aa). Positions 63–141 are domain II; sequence RPEELHLFTL…KSGLVDGTET (79 aa). A flexible linker region spans residues 141–145; it reads TEAIP. Positions 146–202 are domain III; the sequence is AGGGDNDEALAALLALGYSREEIGPILARVRQELGNAAPTTAVLQAVLKTFGRGGGD.

Belongs to the RuvA family. Homotetramer. Forms an RuvA(8)-RuvB(12)-Holliday junction (HJ) complex. HJ DNA is sandwiched between 2 RuvA tetramers; dsDNA enters through RuvA and exits via RuvB. An RuvB hexamer assembles on each DNA strand where it exits the tetramer. Each RuvB hexamer is contacted by two RuvA subunits (via domain III) on 2 adjacent RuvB subunits; this complex drives branch migration. In the full resolvosome a probable DNA-RuvA(4)-RuvB(12)-RuvC(2) complex forms which resolves the HJ.

It localises to the cytoplasm. The RuvA-RuvB-RuvC complex processes Holliday junction (HJ) DNA during genetic recombination and DNA repair, while the RuvA-RuvB complex plays an important role in the rescue of blocked DNA replication forks via replication fork reversal (RFR). RuvA specifically binds to HJ cruciform DNA, conferring on it an open structure. The RuvB hexamer acts as an ATP-dependent pump, pulling dsDNA into and through the RuvAB complex. HJ branch migration allows RuvC to scan DNA until it finds its consensus sequence, where it cleaves and resolves the cruciform DNA. The chain is Holliday junction branch migration complex subunit RuvA from Moorella thermoacetica (strain ATCC 39073 / JCM 9320).